The primary structure comprises 186 residues: Small ribosomal subunit protein uS19 (186 aa).

A unknown region spans residues 1 to 95; that stretch reads MREAIKRYGS…YEELYAQYKQ (95 aa). The small ribosomal subunit protein uS19 stretch occupies residues 96 to 186; that stretch reads MTEKKAYVDP…EKTAKVVKKK (91 aa).

Belongs to the universal ribosomal protein uS19 family.

In terms of biological role, protein S19 forms a complex with S13 that binds strongly to the 16S ribosomal RNA. The protein is Small ribosomal subunit protein uS19 of Aquifex aeolicus (strain VF5).